A 634-amino-acid polypeptide reads, in one-letter code: Threonine--tRNA ligase (634 aa).

In terms of domain architecture, TGS spans 1 to 61 (MINITLPDGS…DHDASLRIIT (61 aa)). The segment at 243–534 (DHRRIGKAQD…LIEHHAGAFP (292 aa)) is catalytic. Zn(2+) is bound by residues Cys-334, His-385, and His-511.

The protein belongs to the class-II aminoacyl-tRNA synthetase family. As to quaternary structure, homodimer. Zn(2+) serves as cofactor.

It is found in the cytoplasm. It catalyses the reaction tRNA(Thr) + L-threonine + ATP = L-threonyl-tRNA(Thr) + AMP + diphosphate + H(+). In terms of biological role, catalyzes the attachment of threonine to tRNA(Thr) in a two-step reaction: L-threonine is first activated by ATP to form Thr-AMP and then transferred to the acceptor end of tRNA(Thr). Also edits incorrectly charged L-seryl-tRNA(Thr). The polypeptide is Threonine--tRNA ligase (Xanthomonas axonopodis pv. citri (strain 306)).